A 140-amino-acid polypeptide reads, in one-letter code: uncharacterized protein (140 aa).

Helical transmembrane passes span 4-24 (LLLA…SFSG), 56-76 (EAFI…YLLW), 84-104 (SAAA…LFFS), and 109-129 (IRDV…YVLA).

The protein localises to the cell membrane. May be important for peptidoglycan remodeling. This is an uncharacterized protein from Bacillus subtilis (strain 168).